A 227-amino-acid chain; its full sequence is MELVFIRHGFSEWNAKNLFTGWRDVNLTERGIEEAKAAGKKLLDAGYEFDIAFTSVLTRAIKTCNIVLEESNQLWIPQVKNWRLNERHYGALQGLDKKATAEQYGDEQVHIWRRSYDISPPDLDPQDPNSAHNDRRYAHLPKDVVPNAENLKITLERVLPFWEDQIAPALLSGKRVLVTAHGNSLRALAKHIIGISDEEIMDFEIPTGQPLVLKLDDKLNFVEKFYL.

Substrate-binding positions include 7 to 14, 20 to 21, R59, 86 to 89, K97, 113 to 114, and 182 to 183; these read RHGFSEWN, TG, ERHY, RR, and GN. Catalysis depends on H8, which acts as the Tele-phosphohistidine intermediate. Residue E86 is the Proton donor/acceptor of the active site.

This sequence belongs to the phosphoglycerate mutase family. BPG-dependent PGAM subfamily. In terms of assembly, homodimer.

It carries out the reaction (2R)-2-phosphoglycerate = (2R)-3-phosphoglycerate. Its pathway is carbohydrate degradation; glycolysis; pyruvate from D-glyceraldehyde 3-phosphate: step 3/5. Functionally, catalyzes the interconversion of 2-phosphoglycerate and 3-phosphoglycerate. The protein is 2,3-bisphosphoglycerate-dependent phosphoglycerate mutase of Glaesserella parasuis serovar 5 (strain SH0165) (Haemophilus parasuis).